Consider the following 708-residue polypeptide: Leukotoxin translocation ATP-binding protein LktB (708 aa).

Residues 1–126 form the Peptidase C39 domain; it reads MEANHQRNDL…ACYQGQLILV (126 aa). The ABC transmembrane type-1 domain occupies 155 to 437; the sequence is FLETLIVSIF…LAQLWQDFQQ (283 aa). 5 consecutive transmembrane segments (helical) span residues 159-179, 192-212, 270-290, 296-316, and 389-409; these read LIVSIFLQIFALITPLFFQVV, LNIITVALAIVIIFEIVLSGL, ALTSVLDLLFSFIFFAVMWYY, LVILGSLPFYILWSIFISPIL, and VMVINLWLGAHLVISGDLSIG. Positions 469-704 constitute an ABC transporter domain; the sequence is ISFKNIRFRY…SNGLYSYLHQ (236 aa). Residue 503 to 510 participates in ATP binding; the sequence is GRSGSGKS.

This sequence belongs to the ABC transporter superfamily. Protein-1 exporter (TC 3.A.1.109) family. Homodimer.

Its subcellular location is the cell inner membrane. It carries out the reaction ATP + H2O + proteinSide 1 = ADP + phosphate + proteinSide 2.. Its function is as follows. Part of the ABC transporter complex LktBD involved in leukotoxin export. Transmembrane domains (TMD) form a pore in the inner membrane and the ATP-binding domain (NBD) is responsible for energy generation. The protein is Leukotoxin translocation ATP-binding protein LktB (lktB) of Bibersteinia trehalosi (Pasteurella trehalosi).